Consider the following 1285-residue polypeptide: Transmembrane channel-like protein 1 (1285 aa).

The tract at residues 1–29 (MQEAARRASLRKEHTPTNEKFGDLSKQDS) is disordered. The Cytoplasmic portion of the chain corresponds to 1–164 (MQEAARRASL…KIKRIESHFG (164 aa)). A helical transmembrane segment spans residues 165–202 (SVVSSYFTFLRWIVFVNIMITLIALVFVVLPETLADSV). Residues 203–260 (ANEGRFNRTKTRKQIPANERVHADELAVVWHYDGYLRYSPLFYGYYSDDPFLGNKIKY) are Extracellular-facing. A glycan (N-linked (GalNAc...) asparagine) is linked at Asn-209. A helical transmembrane segment spans residues 261–292 (ALPLAYFMVTLTIFAYSFFAILRKMAANARMS). Residues 293–349 (KLSGSKAEQYIFNWKLFTGWDYTIGNSETASNTVMAVVIKLRESIADIKKDAHGKFR) are Cytoplasmic-facing. A helical membrane pass occupies residues 350-381 (LLQFSLRVFANIIICAMLGFSIYCIIFAVQKS). Over 382-388 (QVQDDGN) the chain is Extracellular. Residues 389 to 416 (LFTKNQVPSVVSTITHVFPMIFDLIGKM) form a helical membrane-spanning segment. At 417-420 (ENYH) the chain is on the cytoplasmic side. A helical transmembrane segment spans residues 421–455 (PRTALRAHLGRVLILYTVNYITLIFALFEKMTALR). Residues 456-667 (DRVNSTSTSS…NHDGHNNDIC (212 aa)) are Extracellular-facing. Residues 458-488 (VNSTSTSSSHRTKRQQGGWNPNMQRPPPYAS) are disordered. A disulfide bridge links Cys-667 with Cys-816. The chain crosses the membrane as a helical span at residues 668 to 705 (WETIIGQEIVKLVTMDLIFTILSILVIDLFRGLWIKYC). Residues 696 to 720 (LFRGLWIKYCSSWWCWDIETTFPEY) form a required for interaction with tmie region. The Cytoplasmic portion of the chain corresponds to 706 to 724 (SSWWCWDIETTFPEYGEFK). Residues 725–745 (VAENVLHIINNQGMIWLGLFF) form a helical membrane-spanning segment. Topologically, residues 746 to 748 (APL) are extracellular. The chain crosses the membrane as a helical span at residues 749–771 (LPAINNIKLIILMYIRGWAVMTC). The tract at residues 766–773 (WAVMTCNV) is required for interaction with tmie. The Cytoplasmic portion of the chain corresponds to 772–785 (NVPAREIFRASRSS). Residues 786 to 809 (NFYLGILLIWLLLCTLPVGFVIAS) traverse the membrane as a helical segment. Residues 810–852 (MSPSRSCGPFARYQHFYTVVTREIEKRVDQTVLSYIRHIASPG) lie on the Extracellular side of the membrane. A helical transmembrane segment spans residues 853–886 (VVIPIILFLILIIYFLFSLVRGLREANTDLQAQL). Residues 887-1285 (VHERTEEKKK…DEDDSPRQID (399 aa)) are Cytoplasmic-facing. 2 disordered regions span residues 940–962 (ADHA…DDER) and 1114–1285 (TIKE…RQID). Residues 948–961 (SSEESDINEDEDDE) show a composition bias toward acidic residues. 3 stretches are compositionally biased toward basic and acidic residues: residues 1121-1131 (DPGKSDKKQTS), 1146-1156 (DEARALREKMK), and 1167-1182 (TVEE…ESEF). Residues 1197–1208 (TEEENEEEETDS) are compositionally biased toward acidic residues.

Belongs to the TMC family. Homodimer. Interacts with calm-1 and tmie to form the MET channel. Expressed in the ASH polymodal avoidance neurons. Also expressed in other sensory neurons, including the ADF, ASE, ADL, AQR, PQR, URX and PHA cells.

It localises to the cell membrane. It catalyses the reaction Na(+)(in) = Na(+)(out). The enzyme catalyses Ca(2+)(in) = Ca(2+)(out). It carries out the reaction K(+)(in) = K(+)(out). Pore-forming subunit of the mechanotransducer (MET) non-selective cation channel complex. The MET complex is composed of symmetric dimeric MET channels, each channel comprising two copies of pore-forming ion-conducting transmembrane TMC subunits and auxiliary proteins including the transmembrane inner ear protein/tmie, the calcium-binding protein/calm-1 and arrestin domain protein arrd-6. Sodium ions are the most permeable, whereas calcium and potassium have lower indices. Sodium-sensor ion channel that acts specifically in salt taste chemosensation. Required for salt-evoked neuronal activity and behavioral avoidance of high concentrations of NaCl. The polypeptide is Transmembrane channel-like protein 1 (tmc-1) (Caenorhabditis elegans).